The following is a 324-amino-acid chain: Olfactory receptor 51D1 (324 aa).

At 1-38 the chain is on the extracellular side; the sequence is MQKPQLLVPIIATSNGNLVHAAYFLLVGIPGLGPTIHF. A helical transmembrane segment spans residues 39–59; that stretch reads WLAFPLCFMYALATLGNLTIV. The Cytoplasmic segment spans residues 60-67; that stretch reads LIIRVERR. The helical transmembrane segment at 68–88 threads the bilayer; that stretch reads LHEPMYLFLAMLSTIDLVLSS. Topologically, residues 89 to 112 are extracellular; sequence ITMPKMASLFLMGIQEIEFNICLA. Residues cysteine 110 and cysteine 202 are joined by a disulfide bond. Residues 113 to 133 form a helical membrane-spanning segment; that stretch reads QMFLIHALSAVESAVLLAMAF. Residues 134 to 152 lie on the Cytoplasmic side of the membrane; it reads DRFVAICHPLRHASVLTGC. A helical transmembrane segment spans residues 153-173; that stretch reads TVAKIGLSALTRGFVFFFPLP. Over 174–209 the chain is Extracellular; it reads FILKWLSYCQTHTVTHSFCLHQDIMKLSCTDTRVNV. A helical membrane pass occupies residues 210–230; the sequence is VYGLFIILSVMGVDSLFIGFS. Over 231–250 the chain is Cytoplasmic; sequence YILILWAVLELSSRRAALKA. The chain crosses the membrane as a helical span at residues 251 to 271; the sequence is FNTCISHLCAVLVFYVPLIGL. Residues 272–285 are Extracellular-facing; sequence SVVHRLGGPTSLLH. Residues 286 to 306 form a helical membrane-spanning segment; sequence VVMANTYLLLPPVVNPLVYGA. At 307–324 the chain is on the cytoplasmic side; that stretch reads KTKEICSRVLCMFSQGGK.

The protein belongs to the G-protein coupled receptor 1 family.

It localises to the cell membrane. Odorant receptor. The polypeptide is Olfactory receptor 51D1 (OR51D1) (Homo sapiens (Human)).